The following is an 84-amino-acid chain: U8-theraphotoxin-Hhn1c 3 (84 aa).

An N-terminal signal peptide occupies residues 1 to 21 (MKVALIVCLVWVMAMMELVSC). Disulfide bonds link Cys-23–Cys-35, Cys-29–Cys-44, Cys-34–Cys-67, Cys-54–Cys-75, and Cys-69–Cys-81.

The protein belongs to the AVIT (prokineticin) family. As to expression, expressed by the venom gland.

Its subcellular location is the secreted. The protein is U8-theraphotoxin-Hhn1c 3 of Cyriopagopus hainanus (Chinese bird spider).